A 402-amino-acid chain; its full sequence is S-adenosylmethionine synthase (402 aa).

An ATP-binding site is contributed by histidine 15. Aspartate 17 contributes to the Mg(2+) binding site. Glutamate 43 provides a ligand contact to K(+). Residues glutamate 56 and glutamine 99 each coordinate L-methionine. The flexible loop stretch occupies residues 99–109 (QSPDIAQGVDT). Residues 174-176 (DGK), 247-248 (RF), aspartate 256, 262-263 (RK), alanine 279, and lysine 283 each bind ATP. Aspartate 256 serves as a coordination point for L-methionine. Lysine 287 provides a ligand contact to L-methionine.

The protein belongs to the AdoMet synthase family. In terms of assembly, homotetramer; dimer of dimers. It depends on Mg(2+) as a cofactor. K(+) serves as cofactor.

It localises to the cytoplasm. It carries out the reaction L-methionine + ATP + H2O = S-adenosyl-L-methionine + phosphate + diphosphate. The protein operates within amino-acid biosynthesis; S-adenosyl-L-methionine biosynthesis; S-adenosyl-L-methionine from L-methionine: step 1/1. In terms of biological role, catalyzes the formation of S-adenosylmethionine (AdoMet) from methionine and ATP. The overall synthetic reaction is composed of two sequential steps, AdoMet formation and the subsequent tripolyphosphate hydrolysis which occurs prior to release of AdoMet from the enzyme. In Streptomyces avermitilis (strain ATCC 31267 / DSM 46492 / JCM 5070 / NBRC 14893 / NCIMB 12804 / NRRL 8165 / MA-4680), this protein is S-adenosylmethionine synthase.